The following is a 586-amino-acid chain: Urease subunit alpha (586 aa).

The 453-residue stretch at 134–586 (GAIDTHIHFI…LPMAQRYFLF (453 aa)) folds into the Urease domain. The Ni(2+) site is built by H139, H141, and K222. K222 is subject to N6-carboxylysine. Substrate is bound at residue H224. Ni(2+) is bound by residues H251 and H277. The Proton donor role is filled by H325. D365 is a Ni(2+) binding site.

Belongs to the metallo-dependent hydrolases superfamily. Urease alpha subunit family. Heterotrimer of UreA (gamma), UreB (beta) and UreC (alpha) subunits. Three heterotrimers associate to form the active enzyme. Requires Ni cation as cofactor. Carboxylation allows a single lysine to coordinate two nickel ions.

Its subcellular location is the cytoplasm. It catalyses the reaction urea + 2 H2O + H(+) = hydrogencarbonate + 2 NH4(+). The protein operates within nitrogen metabolism; urea degradation; CO(2) and NH(3) from urea (urease route): step 1/1. The chain is Urease subunit alpha from Gloeothece citriformis (strain PCC 7424) (Cyanothece sp. (strain PCC 7424)).